Reading from the N-terminus, the 985-residue chain is Lateral signaling target protein 2 homolog (985 aa).

4 disordered regions span residues 310 to 453 (PLGS…ETDE), 498 to 520 (EYGA…PSTS), 533 to 640 (LRLP…SSLS), and 747 to 892 (DNVF…TTTA). Composition is skewed to low complexity over residues 327–348 (HPTT…TNTH), 384–393 (SLSPNSTPTA), and 401–422 (PSHS…PADW). The segment covering 423–453 (SDGDDEDEEDDDDDIEVEEEELDSTDDETDE) has biased composition (acidic residues). Phosphoserine is present on residues S537 and S538. Basic residues-rich tracts occupy residues 563-589 (VYRH…HHQH) and 596-607 (HPHRTTRSGRKR). 2 stretches are compositionally biased toward low complexity: residues 629 to 640 (ASGDTSAASSLS) and 761 to 770 (NGNQANASAQ). Residues 776 to 785 (GSIQRNNTVD) are compositionally biased toward polar residues. S808 carries the post-translational modification Phosphoserine. Residues 812–866 (QESASTSTSSSQLHQEQQQLQIQVQRQRNNSVGSNTPSSASSTSSSSEQNSPVSA) are compositionally biased toward low complexity. Over residues 875-885 (QSNNETQMPSS) the composition is skewed to polar residues. The FYVE-type zinc finger occupies 904 to 964 (DGKAPRCMSC…VCRECYVREV (61 aa)). Residues C910, C913, C926, C929, C934, C937, C956, and C959 each contribute to the Zn(2+) site.

It belongs to the lst-2 family.

Functionally, negative regulator of epidermal growth factor receptor (EGFR) signaling. The protein is Lateral signaling target protein 2 homolog of Drosophila ananassae (Fruit fly).